A 242-amino-acid chain; its full sequence is DNA repair protein RecO (242 aa).

Belongs to the RecO family.

Functionally, involved in DNA repair and RecF pathway recombination. This chain is DNA repair protein RecO, found in Paracoccus denitrificans (strain Pd 1222).